The following is a 2427-amino-acid chain: MATAKCFTDEPQLQSRRKHNLQEMLTEVGLSVDYWLPKLQEDLGVTSAQALQYLDRNDLQKLKSQTTHTWEKRALEKLLDFSQPNSVAELQETPREMKKNRQRQAGQALQALKALQSEGKHREEEAVRRKEAELRQAMEIPEECWPTAEVSLKDITEIMERHLSHMERTLAHSPNLSDGDLVRWASGGLALQGIYKTNHPRSLIQKREELLSVPKQFSLVGPEHGTEIKTMEFSSFHEQAMFTETIKMMGFSSTSLVKGEGWGFSLEAGIDQNEQTASENTHQSHSEQTYFCSARFSYIPLATCHFHINDLELSNAALQELKTIEELLEQTTDHRDGLPLLRHRAENFFHRFGSHANQGPLQLGGIYCWKAISEGFKSEHLADVKQQTRESLNIYIMGSYSGFGVKVGASVNIANSNSETASFSTTHLHSQTKVQLSVAQIGGPAEADGIAQWTAGLVVSNQTWSVIDRELQLVPIWDIILSSHRTDFKNALQVANCLKDNYTALTELDAQIQEGEEFLTARKEAKLFIEDVKCWEVSDPEEQLTKLLDFMQTLSQKIKSYNIWINTCLTDWDLQNFLINTVKFCKTSPTYKTQFIKSQLCILLEPHVYKVTNFPEAHSIIQWINQSEYGEEQVKITSFSEFIKTLKKTHKYLMEVNFKNEAPETVEEAERTATYEVTTALSSFLKYLKETEQPDMQLLLLSIAAGAGYQLVNSIFQHLLGCDELNFLLDQMQSNQHKYQELKNICNYRAQAFLVLTALRTTVEITDISTEEKRQRLALIKQHMGTLLSEEVAHVLTKHGEHHDWESLENDLRLLIEGDYKATTHYLQMDEVKKQLQSLCHGKKQTYKQKSNENITKGMIENGPFLKLLQRLGLDNYYPKRMSRADFHLIYKTSVYNSQPRSEKELPFYFLQKLLMLDYGFRHLIVKDDENIKKQISIGSSNHENEDIDPYDDVIIDNDSPGYPSATESWPHIHPLDIQMTILHCADDLTRQYIFSKLSICHYALPLVVPNPNTSQIEFYLWSLRQIRKSWQDASKSPQDKSYSHRNQQMCRVSTPIVSFIRVGNDLSASKSQIMNSLLSKRKHDVFFHRHCKGSNKHCLLMQGVVEICWFCPAGQGEDTFENCLTFTSLHGDAKEHTQQLSFLQHVSSIIVVLMSVSDNNKENQKLVRHLWQSSTPLICLIDDKEKAIANTSGKRMRIGIKNRNEAELTEELTNAIKHFLELSNTVLSLEDCSQTARELGFIIDEDQRDCKEAKEKAQTVMALLEEYKLSQTKENLLPLQGQLWHLWCKKDKEFYHLREKGNRSIEQHKSEIETHKRKIRRQQLEKAFPLNDLMRSVLELLQDYSETHNKLYVLQWLTLFFDNLTIDHLDKLHERQRSLWLRIQTEKQRAQKSNSVQNQIEAISTEIHNCTLGIEHLLREVGQIYEALEETSSSRDSLFLCLPQIAADLMIAGVPIELMDGDASYVPLKWVAAIFDKITEKVGDKRLFVLSVLGLQSSGKSTLLNALFGLQFTVSAGRCTKGAYMQLLKVEETFTEELGFNYVLVIDTEGLRAPELNNKSQNWDHELATLVIGLGNLTLINIFGENPSDIQDILQISVQAFLRMKQVKISPSCLFVHQNVGEVTAKDQTMEGRKRLEQKLDEMTALAAELEECSNITRFSDVIKFDANRHVYYFAHLWDGNPPMAPPNPRYSYNVQELRNEILSTAQQESRGRILKISDFKFRVQDLWKALVSENFIFSFRNTQEVIAMSKLETKYNEWTWELRSHVLDLQNQLDNQIQNGKILTLTSNLLEEPLSRKLKTIKEEFDKYFEEDPDCEILVQWKANFEHKLLILKDSLISDTRQKCNEHISLKNSQEILDNQKSQYENQLLERSRKLALNLKGKELSDEELHEKFRQLWTSWIYDVSSNVPHVTEPNIDLDSENILLEYFKKDKNIVERLKIKSQGKFEIMYDKHIQMKKKYLLLRKSLETCHVESIKKTTNNIQLKFTETLTNIWKQKRDYSQNYFHEILRIIENELKSEPCEGDYTFTKDYIIDLSLYLFQRASKDFKKMHAAFKTANDPVNYLERKKDDFFMSFKISCQGATSITSFVDFLWLKLTPAISVSIWKIMVQKIAGDMRATCPEFNGNRANLEIHILYSLAEEEKFDKYWKYIQKPEEFFRDYIRDHIKRYCSEKESEKIKTFLNISLGDIKNTILSAIHNSTKVAKAKGSTASHWLDLFCDHLGSNLVFPRKDLVSIEHQELMDTEFLKEAMSKALDPAMREVEEDCSSKHIDEIVPDIEKILSEHLCGCWKQCPFCKAICTNTIPQHEGDHSVPFHRPQAVSGWHWHKTDQFHINVCTSSVASNISFILDGFREFPFKKYREAGGDYATWSITPDSSTQPYWKWFVCHFRSNLEENYGKKFTGKGSLPDLWTKITKQEVLNDLKK.

Residues 1485-1726 (DKRLFVLSVL…KISDFKFRVQ (242 aa)) enclose the VLIG-type G domain. Residues 1495-1502 (GLQSSGKS), 1548-1551 (DTEG), and 1625-1628 (TAKD) contribute to the GTP site.

This sequence belongs to the TRAFAC class dynamin-like GTPase superfamily. Very large inducible GTPase (VLIG) family. As to expression, widely expressed. Expressed at low basal level in lung, heart, thymus and spleen; at still lower level in liver, ovary, kidney and brain. Expressed at very weak level in testis. Undetectable in embryo.

Its subcellular location is the cytoplasm. The protein localises to the cytosol. It localises to the nucleus. This chain is Interferon-induced very large GTPase 1 (Gvin1), found in Mus musculus (Mouse).